A 425-amino-acid chain; its full sequence is Queuine tRNA-ribosyltransferase accessory subunit 2 (425 aa).

The segment at 302–323 (QNGAQDLEKNSPEEDQEEEVVK) is disordered. Zn(2+)-binding residues include Cys351, Cys353, Cys356, and His382.

Belongs to the queuine tRNA-ribosyltransferase family. QTRT2 subfamily. Heterodimer of a catalytic subunit QTRT1 and an accessory subunit QTRT2. Zn(2+) serves as cofactor.

It is found in the cytoplasm. The protein localises to the mitochondrion outer membrane. Functionally, non-catalytic subunit of the queuine tRNA-ribosyltransferase (TGT) that catalyzes the base-exchange of a guanine (G) residue with queuine (Q) at position 34 (anticodon wobble position) in tRNAs with GU(N) anticodons (tRNA-Asp, -Asn, -His and -Tyr), resulting in the hypermodified nucleoside queuosine (7-(((4,5-cis-dihydroxy-2-cyclopenten-1-yl)amino)methyl)-7-deazaguanosine). The polypeptide is Queuine tRNA-ribosyltransferase accessory subunit 2 (Gallus gallus (Chicken)).